Reading from the N-terminus, the 613-residue chain is Cleavage and polyadenylation specificity factor subunit 3-II (613 aa).

The HXHXDH motif signature appears at 67 to 72 (HFHMDH).

This sequence belongs to the metallo-beta-lactamase superfamily. RNA-metabolizing metallo-beta-lactamase-like family. INTS11 subfamily. As to quaternary structure, component of the CPSF complex, at least composed of CPSF160, CPSF100, CPSF73-I, CPSF73-II, CPSF30, FY and FIPS5. Interacts with CPSF30, CPSF100, CPSF160 and FY. As to expression, highly expressed in senescence leaves, petals, stamens, pollen and late stages of siliques with seeds. Also detected in roots, stems, leaves and seedlings.

The protein resides in the nucleus. Its function is as follows. Component of the cleavage and polyadenylation specificity factor (CPSF) complex that play a key role in pre-mRNA 3'-end formation, recognizing the AAUAAA signal sequence and interacting with poly(A) polymerase and other factors to bring about cleavage and poly(A) addition. May function as mRNA 3'-end-processing endonuclease and also be involved in the histone 3'-end pre-mRNA processing. The chain is Cleavage and polyadenylation specificity factor subunit 3-II (CPSF73-II) from Arabidopsis thaliana (Mouse-ear cress).